The sequence spans 437 residues: Putative ABC transporter ATP-binding protein CTC_00753 (437 aa).

ABC transporter domains are found at residues 1–143 and 179–416; these read MERE…LPTI and LKFK…QISK. Position 219 to 226 (219 to 226) interacts with ATP; that stretch reads GENGAGKS.

It belongs to the ABC transporter superfamily.

Its subcellular location is the cell membrane. Probably part of an ABC transporter complex. Responsible for energy coupling to the transport system. This chain is Putative ABC transporter ATP-binding protein CTC_00753, found in Clostridium tetani (strain Massachusetts / E88).